The sequence spans 359 residues: MAAEGKNVLIMAGGTGGHVFPALACAREFQARGYSVHWLGTPRGIENELVPQAGLPLHLIQVSGLRGKGKLSLLKAPFTLVKAVLQARRIIRQLKPVCVLGFGGYVTGPGGVAARLCGVPLVIHEQNARAGTANRLLVPLSARVCEAFPNTFEASDKRRTTGNPVRPELFMDAQRTPLGERRARLLVLGGSLGAEPLNKLLPKALSEVPAALRPEVFHQAGKQHAPITAERYHEAGVAAQVEPFIKDMAQAYGWADLVVCRAGALTVSELAAAGLPSMLVPLPHAIDDHQTHNAQYLAREGAAFLMPQATTGAAQLAERLNEVLMQPEKLNVMAGTARRLAKPAATSTVVDICLEVAHG.

UDP-N-acetyl-alpha-D-glucosamine contacts are provided by residues 15 to 17, N127, R166, S191, I245, 264 to 269, and Q290; these read TGG and ALTVSE.

Belongs to the glycosyltransferase 28 family. MurG subfamily.

The protein resides in the cell inner membrane. It carries out the reaction di-trans,octa-cis-undecaprenyl diphospho-N-acetyl-alpha-D-muramoyl-L-alanyl-D-glutamyl-meso-2,6-diaminopimeloyl-D-alanyl-D-alanine + UDP-N-acetyl-alpha-D-glucosamine = di-trans,octa-cis-undecaprenyl diphospho-[N-acetyl-alpha-D-glucosaminyl-(1-&gt;4)]-N-acetyl-alpha-D-muramoyl-L-alanyl-D-glutamyl-meso-2,6-diaminopimeloyl-D-alanyl-D-alanine + UDP + H(+). The protein operates within cell wall biogenesis; peptidoglycan biosynthesis. Functionally, cell wall formation. Catalyzes the transfer of a GlcNAc subunit on undecaprenyl-pyrophosphoryl-MurNAc-pentapeptide (lipid intermediate I) to form undecaprenyl-pyrophosphoryl-MurNAc-(pentapeptide)GlcNAc (lipid intermediate II). The sequence is that of UDP-N-acetylglucosamine--N-acetylmuramyl-(pentapeptide) pyrophosphoryl-undecaprenol N-acetylglucosamine transferase from Pseudomonas putida (strain ATCC 47054 / DSM 6125 / CFBP 8728 / NCIMB 11950 / KT2440).